Reading from the N-terminus, the 101-residue chain is MAETTKATAAEPAADEALVRGYRKARRGYVVSDKMDKTIVVEVEDRVKHPLYGKVLRRTSKVKAHDESNVAGIGDLVLINETRPLSASKRWRLVEILEKAK.

It belongs to the universal ribosomal protein uS17 family. In terms of assembly, part of the 30S ribosomal subunit.

One of the primary rRNA binding proteins, it binds specifically to the 5'-end of 16S ribosomal RNA. This chain is Small ribosomal subunit protein uS17, found in Leifsonia xyli subsp. xyli (strain CTCB07).